Consider the following 508-residue polypeptide: Cell division protein FtsZ (508 aa).

GTP-binding positions include 24–28 (GAGGN), 111–113 (GTG), E142, R146, and D190. 2 disordered regions span residues 342–389 (IAET…SAPQ) and 428–508 (VAEE…RLAN). The span at 464-482 (QQASAPQAQARSAQSARPQ) shows a compositional bias: low complexity.

This sequence belongs to the FtsZ family. In terms of assembly, homodimer. Polymerizes to form a dynamic ring structure in a strictly GTP-dependent manner. Interacts directly with several other division proteins.

It is found in the cytoplasm. Essential cell division protein that forms a contractile ring structure (Z ring) at the future cell division site. The regulation of the ring assembly controls the timing and the location of cell division. One of the functions of the FtsZ ring is to recruit other cell division proteins to the septum to produce a new cell wall between the dividing cells. Binds GTP and shows GTPase activity. In Caulobacter vibrioides (strain ATCC 19089 / CIP 103742 / CB 15) (Caulobacter crescentus), this protein is Cell division protein FtsZ.